The primary structure comprises 682 residues: tRNA(Met) cytidine acetyltransferase TmcA (682 aa).

ATP contacts are provided by residues Q176, 198 to 207, and R320; that span reads GRGKSTLAGM. Residues 357–534 form the N-acetyltransferase domain; it reads QQQWIQQPEL…SGCYTAMAIF (178 aa). Acetyl-CoA is bound by residues 462 to 464 and E502; that span reads VAV.

The protein belongs to the RNA cytidine acetyltransferase family. TmcA subfamily.

It localises to the cytoplasm. It catalyses the reaction cytidine(34) in elongator tRNA(Met) + acetyl-CoA + ATP + H2O = N(4)-acetylcytidine(34) in elongator tRNA(Met) + ADP + phosphate + CoA + H(+). In terms of biological role, catalyzes the formation of N(4)-acetylcytidine (ac(4)C) at the wobble position of tRNA(Met), by using acetyl-CoA as an acetyl donor and ATP (or GTP). In Photorhabdus asymbiotica subsp. asymbiotica (strain ATCC 43949 / 3105-77) (Xenorhabdus luminescens (strain 2)), this protein is tRNA(Met) cytidine acetyltransferase TmcA.